We begin with the raw amino-acid sequence, 404 residues long: Tryptophan synthase beta chain (404 aa).

Position 98 is an N6-(pyridoxal phosphate)lysine (K98).

This sequence belongs to the TrpB family. As to quaternary structure, tetramer of two alpha and two beta chains. Pyridoxal 5'-phosphate serves as cofactor.

The catalysed reaction is (1S,2R)-1-C-(indol-3-yl)glycerol 3-phosphate + L-serine = D-glyceraldehyde 3-phosphate + L-tryptophan + H2O. Its pathway is amino-acid biosynthesis; L-tryptophan biosynthesis; L-tryptophan from chorismate: step 5/5. In terms of biological role, the beta subunit is responsible for the synthesis of L-tryptophan from indole and L-serine. This chain is Tryptophan synthase beta chain, found in Rhodopseudomonas palustris (strain BisA53).